Consider the following 313-residue polypeptide: Ornithine carbamoyltransferase (313 aa).

Residues 57–60, Q84, R108, and 135–138 each bind carbamoyl phosphate; these read STRT and HPTQ. L-ornithine-binding positions include N167, D231, and 235 to 236; that span reads SM. Residues 272 to 273 and R300 each bind carbamoyl phosphate; that span reads CL.

This sequence belongs to the aspartate/ornithine carbamoyltransferase superfamily. OTCase family.

The protein resides in the cytoplasm. The enzyme catalyses carbamoyl phosphate + L-ornithine = L-citrulline + phosphate + H(+). It functions in the pathway amino-acid biosynthesis; L-arginine biosynthesis; L-arginine from L-ornithine and carbamoyl phosphate: step 1/3. Functionally, reversibly catalyzes the transfer of the carbamoyl group from carbamoyl phosphate (CP) to the N(epsilon) atom of ornithine (ORN) to produce L-citrulline. This is Ornithine carbamoyltransferase from Caldanaerobacter subterraneus subsp. tengcongensis (strain DSM 15242 / JCM 11007 / NBRC 100824 / MB4) (Thermoanaerobacter tengcongensis).